The following is a 393-amino-acid chain: S-adenosylmethionine synthase 1 (393 aa).

A Mg(2+)-binding site is contributed by E9. H15 contributes to the ATP binding site. E43 is a K(+) binding site. L-methionine-binding residues include E56 and Q99. Residues 167 to 169 (DGK), 235 to 238 (SGRF), D246, 252 to 253 (RK), A269, K273, and K277 contribute to the ATP site. D246 lines the L-methionine pocket. K277 serves as a coordination point for L-methionine.

The protein belongs to the AdoMet synthase family. In terms of assembly, homotetramer. It depends on Mn(2+) as a cofactor. Requires Mg(2+) as cofactor. Co(2+) is required as a cofactor. K(+) serves as cofactor. The cofactor is NH4(+). Mostly expressed in roots, and, to a lower extent, in hypocotyls and cotyledons.

The protein resides in the cytoplasm. The enzyme catalyses L-methionine + ATP + H2O = S-adenosyl-L-methionine + phosphate + diphosphate. Its pathway is amino-acid biosynthesis; S-adenosyl-L-methionine biosynthesis; S-adenosyl-L-methionine from L-methionine: step 1/1. Inhibited by products of SAMS reaction (SAM, Pi, PPi), substrate analogs (cycloleucine and ethionine), and alternative nucleotides (GTP, CTP and ADP). Strongly repressed by PPPi. Its function is as follows. Catalyzes the formation of S-adenosylmethionine from methionine and ATP. The reaction comprises two steps that are both catalyzed by the same enzyme: formation of S-adenosylmethionine (AdoMet) and triphosphate, and subsequent hydrolysis of the triphosphate. The protein is S-adenosylmethionine synthase 1 (SAMS1) of Catharanthus roseus (Madagascar periwinkle).